Reading from the N-terminus, the 216-residue chain is Pyrophosphatase PpaX (216 aa).

Catalysis depends on Asp9, which acts as the Nucleophile.

The protein belongs to the HAD-like hydrolase superfamily. PpaX family. The cofactor is Mg(2+).

The catalysed reaction is diphosphate + H2O = 2 phosphate + H(+). Functionally, hydrolyzes pyrophosphate formed during P-Ser-HPr dephosphorylation by HPrK/P. Might play a role in controlling the intracellular pyrophosphate pool. The sequence is that of Pyrophosphatase PpaX from Bacillus cereus (strain ATCC 10987 / NRS 248).